The primary structure comprises 92 residues: Small ribosomal subunit protein uS19 (92 aa).

The protein belongs to the universal ribosomal protein uS19 family.

Functionally, protein S19 forms a complex with S13 that binds strongly to the 16S ribosomal RNA. In Lactococcus lactis subsp. cremoris (strain MG1363), this protein is Small ribosomal subunit protein uS19.